A 567-amino-acid polypeptide reads, in one-letter code: Cytochrome P450 monooxygenase 231 (567 aa).

Residues 3–23 (VSTNELAILAIVLLATGVLFY) form a helical membrane-spanning segment. Residues asparagine 81 and asparagine 223 are each glycosylated (N-linked (GlcNAc...) asparagine). Cysteine 475 is a binding site for heme.

Belongs to the cytochrome P450 family. It depends on heme as a cofactor.

It localises to the membrane. Its pathway is secondary metabolite biosynthesis. Cytochrome P450 monooxygenase that is able to use anthracene, carbazole, pyrene, and phenanthrene as substrates for oxidation. These multifunctional properties against a series of polycyclic aromatic hydrocarbons (PAHs) suggest that CYP231 would play important roles, at least in part, in fungal metabolic systems involved in xenobiotic detoxification. The protein is Cytochrome P450 monooxygenase 231 of Postia placenta (strain ATCC 44394 / Madison 698-R) (Brown rot fungus).